The chain runs to 225 residues: Cytidylate kinase (225 aa).

11–19 (GPAAAGKST) serves as a coordination point for ATP.

Belongs to the cytidylate kinase family. Type 1 subfamily.

It localises to the cytoplasm. The catalysed reaction is CMP + ATP = CDP + ADP. The enzyme catalyses dCMP + ATP = dCDP + ADP. In Bacillus pumilus (strain SAFR-032), this protein is Cytidylate kinase.